The sequence spans 247 residues: Probable phosphatase Shew_1420 (247 aa).

Zn(2+)-binding residues include His8, His10, His16, His41, Glu74, His102, His132, Asp193, and His195.

Belongs to the PHP family. It depends on Zn(2+) as a cofactor.

The chain is Probable phosphatase Shew_1420 from Shewanella loihica (strain ATCC BAA-1088 / PV-4).